The following is a 470-amino-acid chain: Sorting nexin-17 (470 aa).

The PX domain maps to 1 to 109 (MHFSIPETES…SFLRRAQQET (109 aa)). A 1,2-diacyl-sn-glycero-3-phospho-(1D-myo-inositol-3-phosphate) is bound by residues arginine 36, serine 38, lysine 62, and arginine 75. In terms of domain architecture, Ras-associating spans 115–206 (EEVSLEVLLS…YKIVLRKSYW (92 aa)). Residues 115–432 (EEVSLEVLLS…DASRESMVKL (318 aa)) form an FERM-like region. The interval 270–432 (GYLRFDACVA…DASRESMVKL (163 aa)) is PTB-like F3 module. Positions 401-425 (GGNLRRSDSQQAVKSPPLLESPDAS) are disordered. 6 positions are modified to phosphoserine: serine 407, serine 409, serine 415, serine 421, serine 437, and serine 440.

This sequence belongs to the sorting nexin family. As to quaternary structure, monomer. Interacts with APP (via cytoplasmic YXNPXY motif). Interacts with KIF1B. Interacts with the C-termini of P-selectin, PTC, LDLR, VLDLR, LRP1 and LRP8. Interacts with KRIT1 (via N-terminus). Interacts with HRAS. Interacts with ITGB1 and ITGB5 (via NPxY motif). Interacts with CCDC22 and CCDC93; the interaction associates SNX17 with the CCC complex. Interacts (via C-terminus) with VPS26C and VPS35L; the interactions are direct and associate SNX17 with the retriever complex.

The protein resides in the cytoplasm. Its subcellular location is the early endosome. It localises to the cytoplasmic vesicle membrane. Functionally, critical regulator of endosomal recycling of numerous surface proteins, including integrins, signaling receptor and channels. Binds to NPxY sequences in the cytoplasmic tails of target cargos. Associates with retriever and CCC complexes to prevent lysosomal degradation and promote cell surface recycling of numerous cargos such as integrins ITGB1, ITGB5 and their associated alpha subunits. Also required for maintenance of normal cell surface levels of APP and LRP1. Interacts with membranes containing phosphatidylinositol 3-phosphate (PtdIns(3P)). The protein is Sorting nexin-17 (Snx17) of Rattus norvegicus (Rat).